The sequence spans 251 residues: Hydroxyacylglutathione hydrolase (251 aa).

His53, His55, Asp57, His58, His110, Asp127, and His165 together coordinate Zn(2+).

It belongs to the metallo-beta-lactamase superfamily. Glyoxalase II family. As to quaternary structure, monomer. The cofactor is Zn(2+).

The catalysed reaction is an S-(2-hydroxyacyl)glutathione + H2O = a 2-hydroxy carboxylate + glutathione + H(+). It participates in secondary metabolite metabolism; methylglyoxal degradation; (R)-lactate from methylglyoxal: step 2/2. Thiolesterase that catalyzes the hydrolysis of S-D-lactoyl-glutathione to form glutathione and D-lactic acid. This is Hydroxyacylglutathione hydrolase from Citrobacter koseri (strain ATCC BAA-895 / CDC 4225-83 / SGSC4696).